Reading from the N-terminus, the 587-residue chain is MSSIRVKQYDALIVGAGGAGLRAALEMAQSRQYKVAVVSKVFPTRSHTVSAQGGIAAALGNVVPDKPIWHMFDTVKGSDYLGDQDAIQYMCEQAPPSVYELEHYGLPFSRLDDGRIYQRAFGGHTRDFGKEMARRTCACADRTGHAMLHTLYQKNVEAGTHFYYEWYGIDLVRGAQGGIAGMIAMNMETSELVFFKSRATIFATGGAGRIYETTSNAYTNTGDGIGMVLRAGLPVQDMEFWQFHPTGIYGVGCLITEGARGEGGYLINKDGERFMERYSPHLKDLDCRDVVARSILQEVMAGGGVGPKKDHVLLKLDHLGEKVLRERLPGIIELSEKFANVDITKEPIPILPTCHYMMGGIPTNIHGQALTVDENGKDQIIEGLFAAGECACVSVHGANRLGTNSLLDLVVFGRAIGLHLEEALKTELKHRSENPDDIDAAIARLKRWEKPNNVENPALLRQEMRKAMSEDFGVFREEQKMKQGLERLQKLNERLQRAKLTDTSRTFNNARIEALELDNLMEVSYATAVSAQQRTESRGAHSRYDYKERDDANWLKHTVYFRDGHIAYRPVNMKPKGMDPFPPKSRD.

FAD contacts are provided by residues 15 to 20 (GAGGAG), 39 to 54 (SKVF…AQGG), and Asp223. His47 carries the tele-8alpha-FAD histidine modification. Substrate is bound by residues His244 and Thr256. Residue Arg288 is the Proton acceptor of the active site. Substrate is bound at residue His355. Position 389 (Glu389) interacts with FAD. Substrate is bound at residue Arg400. 405-406 (SL) provides a ligand contact to FAD.

Belongs to the FAD-dependent oxidoreductase 2 family. FRD/SDH subfamily. In terms of assembly, part of an enzyme complex containing four subunits: a flavoprotein, an iron-sulfur protein, cytochrome b-556 and a hydrophobic protein. FAD serves as cofactor.

It is found in the cell inner membrane. The catalysed reaction is a quinone + succinate = fumarate + a quinol. It participates in carbohydrate metabolism; tricarboxylic acid cycle; fumarate from succinate (bacterial route): step 1/1. This Coxiella burnetii (strain RSA 493 / Nine Mile phase I) protein is Succinate dehydrogenase flavoprotein subunit (sdhA).